We begin with the raw amino-acid sequence, 115 residues long: uncharacterized protein (115 aa).

A signal peptide spans 1 to 29; sequence MKKAMAILAVLAAAAVICGLLFFHNDVTD.

This is an uncharacterized protein from Bacillus subtilis (strain 168).